We begin with the raw amino-acid sequence, 1335 residues long: Xanthine dehydrogenase/oxidase (1335 aa).

The 2Fe-2S ferredoxin-type domain maps to aspartate 7 to isoleucine 94. [2Fe-2S] cluster-binding residues include cysteine 46, cysteine 51, cysteine 54, cysteine 76, cysteine 115, cysteine 118, cysteine 150, and cysteine 152. In terms of domain architecture, FAD-binding PCMH-type spans phenylalanine 231–lysine 416. FAD is bound by residues leucine 259–isoleucine 266, phenylalanine 339, serine 349–asparagine 353, aspartate 362, leucine 406, and lysine 424. Cysteine 538 and cysteine 995 are disulfide-bonded. Residues glutamine 770 and phenylalanine 801 each contribute to the Mo-molybdopterin site. Residues glutamate 805 and arginine 883 each coordinate substrate. Arginine 915 contacts Mo-molybdopterin. Substrate is bound by residues phenylalanine 917 and threonine 1013. Alanine 1082 provides a ligand contact to Mo-molybdopterin. Glutamate 1264 (proton acceptor) is an active-site residue.

It belongs to the xanthine dehydrogenase family. Homodimer. Interacts with BTN1A1. FAD serves as cofactor. Mo-molybdopterin is required as a cofactor. Requires [2Fe-2S] cluster as cofactor. Post-translationally, subject to partial proteolysis; this alters the enzyme from the dehydrogenase form (D) to the oxidase form (O). Contains sulfhydryl groups that are easily oxidized (in vitro); this alters the enzyme from the dehydrogenase form (D) to the oxidase form (O).

It is found in the cytoplasm. It localises to the peroxisome. Its subcellular location is the secreted. The enzyme catalyses xanthine + NAD(+) + H2O = urate + NADH + H(+). It catalyses the reaction hypoxanthine + NAD(+) + H2O = xanthine + NADH + H(+). The catalysed reaction is xanthine + O2 + H2O = urate + H2O2. Its activity is regulated as follows. Can be converted from the dehydrogenase form (D) to the oxidase form (O) irreversibly by proteolysis or reversibly through the oxidation of sulfhydryl groups. Functionally, key enzyme in purine degradation. Catalyzes the oxidation of hypoxanthine to xanthine. Catalyzes the oxidation of xanthine to uric acid. Contributes to the generation of reactive oxygen species. This chain is Xanthine dehydrogenase/oxidase (Xdh), found in Mus musculus (Mouse).